A 228-amino-acid polypeptide reads, in one-letter code: Probable septum site-determining protein MinC (228 aa).

This sequence belongs to the MinC family. As to quaternary structure, interacts with MinD and FtsZ.

Functionally, cell division inhibitor that blocks the formation of polar Z ring septums. Rapidly oscillates between the poles of the cell to destabilize FtsZ filaments that have formed before they mature into polar Z rings. Prevents FtsZ polymerization. The sequence is that of Probable septum site-determining protein MinC from Yersinia enterocolitica serotype O:8 / biotype 1B (strain NCTC 13174 / 8081).